The following is a 289-amino-acid chain: Bis(5'-nucleosyl)-tetraphosphatase, symmetrical (289 aa).

Belongs to the Ap4A hydrolase family.

The catalysed reaction is P(1),P(4)-bis(5'-adenosyl) tetraphosphate + H2O = 2 ADP + 2 H(+). In terms of biological role, hydrolyzes diadenosine 5',5'''-P1,P4-tetraphosphate to yield ADP. This is Bis(5'-nucleosyl)-tetraphosphatase, symmetrical from Yersinia pseudotuberculosis serotype IB (strain PB1/+).